The primary structure comprises 178 residues: Photosystem II extrinsic protein V (178 aa).

Positions 1–38 (MFSKFFSLQKAFAAARRRLLILILVLGMAGYAWGPALA) are cleaved as a signal peptide. Residues cysteine 71, cysteine 74, histidine 75, and histidine 126 each contribute to the heme c site.

This sequence belongs to the cytochrome c family. PsbV subfamily. In terms of assembly, PSII is composed of 1 copy each of membrane proteins PsbA, PsbB, PsbC, PsbD, PsbE, PsbF, PsbH, PsbI, PsbJ, PsbK, PsbL, PsbM, PsbT, PsbX, PsbY, PsbZ, Psb30/Ycf12, peripheral proteins PsbO, CyanoQ (PsbQ), PsbU, PsbV and a large number of cofactors. It forms dimeric complexes. Requires heme c as cofactor.

The protein localises to the cellular thylakoid membrane. One of the extrinsic, lumenal subunits of photosystem II (PSII). PSII is a light-driven water plastoquinone oxidoreductase, using light energy to abstract electrons from H(2)O, generating a proton gradient subsequently used for ATP formation. The extrinsic proteins stabilize the structure of photosystem II oxygen-evolving complex (OEC), the ion environment of oxygen evolution and protect the OEC against heat-induced inactivation. Low-potential cytochrome c that plays a role in the OEC of PSII. This chain is Photosystem II extrinsic protein V, found in Synechococcus sp. (strain JA-3-3Ab) (Cyanobacteria bacterium Yellowstone A-Prime).